A 398-amino-acid chain; its full sequence is Phosphoglycerate kinase (398 aa).

Residues 21-23 (DIN), R37, 60-63 (HQGR), R117, and R157 contribute to the substrate site. Residues E332 and 357-360 (GGDT) contribute to the ATP site.

The protein belongs to the phosphoglycerate kinase family. In terms of assembly, monomer.

The protein resides in the cytoplasm. It catalyses the reaction (2R)-3-phosphoglycerate + ATP = (2R)-3-phospho-glyceroyl phosphate + ADP. Its pathway is carbohydrate degradation; glycolysis; pyruvate from D-glyceraldehyde 3-phosphate: step 2/5. This chain is Phosphoglycerate kinase, found in Halobacterium salinarum (strain ATCC 29341 / DSM 671 / R1).